We begin with the raw amino-acid sequence, 766 residues long: Serine/threonine-protein kinase tousled-like 1 (766 aa).

Met-1 is subject to N-acetylmethionine. The span at 1–19 shows a compositional bias: polar residues; the sequence is MSVQSSSGSLEGPPSWSQL. The disordered stretch occupies residues 1-197; sequence MSVQSSSGSL…SPSPTALAFG (197 aa). Low complexity predominate over residues 20–33; it reads STSPTPGSAAAARS. Thr-38 is modified (phosphothreonine). The segment covering 43 to 64 has biased composition (basic and acidic residues); it reads RPREGAMDELHSLDPRRQELLE. Residues Ser-54, Ser-77, and Ser-80 each carry the phosphoserine modification. Residues 68–85 are compositionally biased toward low complexity; sequence TGVASGSTGSTGSCSVGA. Residues 87–103 show a composition bias toward polar residues; it reads ASTNNESSNHSFGSLGS. The segment covering 105–121 has biased composition (basic and acidic residues); the sequence is SDKESETPEKKQSESSR. Phosphoserine occurs at positions 134, 159, 174, and 176. The segment covering 170-192 has biased composition (low complexity); sequence SPQNSHSHSTPSSSVRPNSPSPT. The stretch at 230–281 forms a coiled coil; sequence QDLEKKEGRIDDLLRANCDLRRQIDEQQKLLEKYKERLNKCISMSKKLLIEK. The segment at 346 to 383 is disordered; sequence LAKRKPPTANNSQAPSTNSEPKQRKNKAVNGAENDPFV. Polar residues predominate over residues 353-365; it reads TANNSQAPSTNSE. A coiled-coil region spans residues 397 to 445; sequence HEQEEIFKLRLGHLKKEEAEIQAELERLERVRNLHIRELKRINNEDNSQ. The Protein kinase domain maps to 456–734; the sequence is YLLLHLLGRG…VHQLANDPYL (279 aa). ATP is bound by residues 462 to 470 and Lys-485; that span reads LGRGGFSEV. Catalysis depends on Asp-586, which acts as the Proton acceptor. Residue Ser-743 is modified to Phosphoserine.

Belongs to the protein kinase superfamily. Ser/Thr protein kinase family. As to quaternary structure, heterodimer with TLK2. The cofactor is Mg(2+). As to expression, widely expressed. Present in fetal placenta, liver, kidney and pancreas but not heart or skeletal muscle. Also found in adult cell lines. Isoform 3 is ubiquitously expressed in all tissues examined.

It localises to the nucleus. The catalysed reaction is L-seryl-[protein] + ATP = O-phospho-L-seryl-[protein] + ADP + H(+). It carries out the reaction L-threonyl-[protein] + ATP = O-phospho-L-threonyl-[protein] + ADP + H(+). Its activity is regulated as follows. Cell-cycle regulated, maximal activity in S-phase. Inactivated by phosphorylation at Ser-743, potentially by CHEK1. Functionally, rapidly and transiently inhibited by phosphorylation following the generation of DNA double-stranded breaks during S-phase. This is cell cycle checkpoint and ATM-pathway dependent and appears to regulate processes involved in chromatin assembly. Isoform 3 phosphorylates and enhances the stability of the t-SNARE SNAP23, augmenting its assembly with syntaxin. Isoform 3 protects the cells from the ionizing radiation by facilitating the repair of DSBs. In vitro, phosphorylates histone H3 at 'Ser-10'. This chain is Serine/threonine-protein kinase tousled-like 1 (TLK1), found in Homo sapiens (Human).